A 504-amino-acid chain; its full sequence is ATP synthase subunit alpha (504 aa).

169–176 (GDRQTGKT) is an ATP binding site.

It belongs to the ATPase alpha/beta chains family. As to quaternary structure, F-type ATPases have 2 components, CF(1) - the catalytic core - and CF(0) - the membrane proton channel. CF(1) has five subunits: alpha(3), beta(3), gamma(1), delta(1), epsilon(1). CF(0) has three main subunits: a(1), b(2) and c(9-12). The alpha and beta chains form an alternating ring which encloses part of the gamma chain. CF(1) is attached to CF(0) by a central stalk formed by the gamma and epsilon chains, while a peripheral stalk is formed by the delta and b chains.

The protein localises to the cell membrane. It carries out the reaction ATP + H2O + 4 H(+)(in) = ADP + phosphate + 5 H(+)(out). Its function is as follows. Produces ATP from ADP in the presence of a proton gradient across the membrane. The alpha chain is a regulatory subunit. The chain is ATP synthase subunit alpha from Clostridium botulinum (strain ATCC 19397 / Type A).